The primary structure comprises 648 residues: Replication restart protein PriA (648 aa).

Residues 131–297 enclose the Helicase ATP-binding domain; that stretch reads TILNESNKPT…EIGKYQLVTL (167 aa). 144–151 contacts ATP; the sequence is GVTGSGKT. Residues 240 to 243 carry the DEAH box motif; that stretch reads DEEH. Cys-358, Cys-361, Cys-367, Cys-370, Cys-385, Cys-388, Cys-398, and Cys-401 together coordinate Zn(2+). A Helicase C-terminal domain is found at 393-548; the sequence is KIFSSCPECL…SFFANELEIR (156 aa).

The protein belongs to the helicase family. PriA subfamily. As to quaternary structure, component of the replication restart primosome. Zn(2+) serves as cofactor.

It carries out the reaction Couples ATP hydrolysis with the unwinding of duplex DNA by translocating in the 3'-5' direction.. The enzyme catalyses ATP + H2O = ADP + phosphate + H(+). In terms of biological role, initiates the restart of stalled replication forks, which reloads the replicative helicase on sites other than the origin of replication. Recognizes and binds to abandoned replication forks and remodels them to uncover a helicase loading site. Promotes assembly of the primosome at these replication forks. The polypeptide is Replication restart protein PriA (Rickettsia felis (strain ATCC VR-1525 / URRWXCal2) (Rickettsia azadi)).